We begin with the raw amino-acid sequence, 308 residues long: MSKPRKKGRDINGIFLLDKSQGMSSNDIMQKVKRLFQANKAGHTGALDPLATGMLPICLGEATKFSQYLLDADKRYQVIAKLGERTDTSDADGQVVQKREVNIDLAKILTALEQFRGEIMQVPTMFSALKYQGKALYEYARAGITIEREARPISIFELKFIDYQIPYLTLEVHCSKGTYIRTLVDDLGEVLGCGAHVTRLRRIAVADYPYNKMMTLEQLQQFSEQEDLDLLDQHLLPMESAVIRLPGLHLTKEQARAVGFGQRIKFLNEQGIQGQVRLISPENLFLGVAVIDENSIVHPQRMVVIKPE.

The active-site Nucleophile is the Asp48.

The protein belongs to the pseudouridine synthase TruB family. Type 1 subfamily.

It catalyses the reaction uridine(55) in tRNA = pseudouridine(55) in tRNA. In terms of biological role, responsible for synthesis of pseudouridine from uracil-55 in the psi GC loop of transfer RNAs. This is tRNA pseudouridine synthase B from Histophilus somni (strain 129Pt) (Haemophilus somnus).